A 360-amino-acid polypeptide reads, in one-letter code: Phospho-N-acetylmuramoyl-pentapeptide-transferase (360 aa).

A run of 10 helical transmembrane segments spans residues 27–47, 72–92, 94–114, 132–152, 168–188, 199–219, 236–256, 263–283, 288–308, and 338–358; these read IVSL…LIGW, PTMG…MWAY, SNPY…VGFV, WKYF…YCIG, IMPQ…VGTS, GLAI…AWAT, AGEL…FLWF, VFMG…IAVL, FLLV…ILQV, and VIVR…ATLK.

The protein belongs to the glycosyltransferase 4 family. MraY subfamily. It depends on Mg(2+) as a cofactor.

Its subcellular location is the cell inner membrane. It carries out the reaction UDP-N-acetyl-alpha-D-muramoyl-L-alanyl-gamma-D-glutamyl-meso-2,6-diaminopimeloyl-D-alanyl-D-alanine + di-trans,octa-cis-undecaprenyl phosphate = di-trans,octa-cis-undecaprenyl diphospho-N-acetyl-alpha-D-muramoyl-L-alanyl-D-glutamyl-meso-2,6-diaminopimeloyl-D-alanyl-D-alanine + UMP. Its pathway is cell wall biogenesis; peptidoglycan biosynthesis. In terms of biological role, catalyzes the initial step of the lipid cycle reactions in the biosynthesis of the cell wall peptidoglycan: transfers peptidoglycan precursor phospho-MurNAc-pentapeptide from UDP-MurNAc-pentapeptide onto the lipid carrier undecaprenyl phosphate, yielding undecaprenyl-pyrophosphoryl-MurNAc-pentapeptide, known as lipid I. The chain is Phospho-N-acetylmuramoyl-pentapeptide-transferase from Edwardsiella ictaluri (strain 93-146).